The following is a 420-amino-acid chain: Mannose-1-phosphate guanylyltransferase regulatory subunit alpha (420 aa).

The substrate-binding domain stretch occupies residues 2 to 251 (LKAVILIGGP…DGIWSQIKSA (250 aa)). GDP-alpha-D-mannose-binding residues include Glu85 and Gln247. Residues 273–420 (LAKHTPGGPR…SRSFTNQIIL (148 aa)) are hexapeptide repeat domain. The interval 356-384 (TPNDPNPNDPRAHMDSESLFKDGKLLPAI) is C-loop.

Belongs to the transferase hexapeptide repeat family. As to quaternary structure, component of the GMPPA-GMPPB mannose-1-phosphate guanylyltransferase complex composed of 4 GMPPA subunits and 8 GMPPB subunits; the complex is organized into three layers, a central layer made up of 2 GMPPA dimers sandwiched between two layers each made up of 2 GMPPB dimers. As to expression, expressed in the liver (at protein level).

The protein resides in the cytoplasm. Functionally, regulatory subunit of the GMPPA-GMPPB mannose-1-phosphate guanylyltransferase complex; reduces the catalytic activity of GMPPB when part of the complex. Mediates allosteric feedback inhibition of GMPPB catalytic activity upon binding GDP-alpha-D-mannose. Together with GMPPB regulates GDP-alpha-D-mannose levels. The sequence is that of Mannose-1-phosphate guanylyltransferase regulatory subunit alpha (GMPPA) from Sus scrofa (Pig).